A 103-amino-acid polypeptide reads, in one-letter code: Small ribosomal subunit protein eS25 (103 aa).

The tract at residues 1–23 (MGGEDMAKKKAPSAKEGEKQQGF) is disordered.

This sequence belongs to the eukaryotic ribosomal protein eS25 family.

This chain is Small ribosomal subunit protein eS25 (rps25e), found in Aeropyrum pernix (strain ATCC 700893 / DSM 11879 / JCM 9820 / NBRC 100138 / K1).